Here is a 776-residue protein sequence, read N- to C-terminus: U3 small nucleolar RNA-associated protein 4 (776 aa).

WD repeat units follow at residues 35–40, 132–169, 178–214, 230–266, 271–308, and 417–452; these read RCRFVD, LPLRNYDCNSGVIWSISINDSQDKLSVGCDNGTVVLID, EHDTILMRQEARVLTLAWKKDDFVIGGCSDGRIRIWS, KVDKAKKESTLVWSVIYLPRTDQIASGDSTGSIKFWD, TLNQSFKAHDADVLCLTTDTDNNYVFSAGVDRKIFQFS, and VCKLTLKDDQNISTCSLSPDGQVLVVGRPSTTKVFH.

Interacts with snoRNA U3. Interacts with MPP10. Component of the ribosomal small subunit (SSU) processome composed of at least 40 protein subunits and snoRNA U3. In the absence of snoRNA3, forms a complex with other t-UTPs. This complex can associate with pre-18S ribosomal RNAs.

It localises to the nucleus. The protein resides in the nucleolus. Involved in nucleolar processing of pre-18S ribosomal RNA. Required for optimal pre-ribosomal RNA transcription by RNA polymerase I together with a subset of U3 proteins required for transcription (t-UTPs). In Saccharomyces cerevisiae (strain ATCC 204508 / S288c) (Baker's yeast), this protein is U3 small nucleolar RNA-associated protein 4 (UTP4).